Here is a 111-residue protein sequence, read N- to C-terminus: uncharacterized protein (111 aa).

This is an uncharacterized protein from Ureaplasma parvum serovar 3 (strain ATCC 700970).